Reading from the N-terminus, the 58-residue chain is Ikitoxin (58 aa).

The region spanning 3-58 is the LCN-type CS-alpha/beta domain; sequence VPGNYPLDKDGNTYKCFLLGENEECLNVCKLHGVQYGYCYASKCWCEYLEDDKDSV. Intrachain disulfides connect cysteine 18/cysteine 41, cysteine 27/cysteine 46, and cysteine 31/cysteine 48.

In terms of tissue distribution, expressed by the venom gland.

The protein resides in the secreted. Functionally, beta toxins bind voltage-independently at site-4 of sodium channels (Nav) and shift the voltage of activation toward more negative potentials thereby affecting sodium channel activation and promoting spontaneous and repetitive firing. Does not produce effect when administered to blowfly and cabbage looper larvae. In mice, does not produce convulsions, tremors, increased ventilation nor death. The chain is Ikitoxin from Parabuthus transvaalicus (Transvaal thick-tailed scorpion).